A 255-amino-acid polypeptide reads, in one-letter code: Zinc import ATP-binding protein ZnuC 1 (255 aa).

The region spanning Ile7–Gln220 is the ABC transporter domain. Gly39–Ser46 serves as a coordination point for ATP. The disordered stretch occupies residues His229–Ala255.

This sequence belongs to the ABC transporter superfamily. Zinc importer (TC 3.A.1.15.5) family. The complex is composed of two ATP-binding proteins (ZnuC), two transmembrane proteins (ZnuB) and a solute-binding protein (ZnuA).

It is found in the cell inner membrane. It carries out the reaction Zn(2+)(out) + ATP(in) + H2O(in) = Zn(2+)(in) + ADP(in) + phosphate(in) + H(+)(in). Its function is as follows. Part of the ABC transporter complex ZnuABC involved in zinc import. Responsible for energy coupling to the transport system. The chain is Zinc import ATP-binding protein ZnuC 1 from Hahella chejuensis (strain KCTC 2396).